Here is a 127-residue protein sequence, read N- to C-terminus: Acetylcholine receptor subunit alpha (127 aa).

Topologically, residues 1–127 are extracellular; sequence ADGIFAIDQF…YFIVNVIIPC (127 aa). Cys-33 and Cys-47 are oxidised to a cystine. Asn-46 and Asn-94 each carry an N-linked (GlcNAc...) asparagine glycan. A disulfide bridge connects residues Cys-97 and Cys-98.

This sequence belongs to the ligand-gated ion channel (TC 1.A.9) family. Acetylcholine receptor (TC 1.A.9.1) subfamily. Alpha-1/CHRNA1 sub-subfamily. As to quaternary structure, one of the alpha chains that assemble within the acetylcholine receptor, a pentamer of two alpha chains, a beta, a delta, and a gamma or epsilon chains.

The protein resides in the postsynaptic cell membrane. The protein localises to the cell membrane. It catalyses the reaction K(+)(in) = K(+)(out). The catalysed reaction is Na(+)(in) = Na(+)(out). Upon acetylcholine binding, the AChR responds by an extensive change in conformation that affects all subunits and leads to opening of an ion-conducting channel across the plasma membrane. Does not bind alpha-bungarotoxin. This chain is Acetylcholine receptor subunit alpha (CHRNA1), found in Natrix tessellata (Dice snake).